The chain runs to 242 residues: MALKNKFSCLWILGLCLVATTSSKIPSITDPHFIDNCIEAHNEWRGKVNPPAADMKYMIWDKGLAKMAKAWANQCKFEHNDCLDKSYKCYAAFEYVGENIWLGGIKSFTPRHAITAWYNETQFYDFDSLSCSRVCGHYTQLVWANSFYVGCAVAMCPNLGGASTAIFVCNYGPAGNFANMPPYVRGESCSLCSKEEKCVKNLCRTPQLIIPNQNPFLKPTGRAPQQTAFNPFSLGFLLLRIF.

Residues 1-22 (MALKNKFSCLWILGLCLVATTS) form the signal peptide. In terms of domain architecture, SCP spans 39 to 171 (EAHNEWRGKV…ASTAIFVCNY (133 aa)). Asparagine 119 carries N-linked (GlcNAc...) asparagine glycosylation. Glycine 221 carries the GPI-anchor amidated glycine lipid modification. Positions 222-242 (RAPQQTAFNPFSLGFLLLRIF) are cleaved as a propeptide — removed in mature form.

Belongs to the CRISP family. In terms of assembly, part of a oolemmal binding multimeric complex (IZUMO1 complex) composed at least of IZUMO1 and GLIPR1L1; the complex assemblage is influenced by the maturation status of the male germ cell. Interacts with IZUMO1. N-glycosylated. N-glycosylation decreases during the transit in the caput. As to expression, highly expressed in testis.

It localises to the cytoplasmic vesicle. The protein resides in the secretory vesicle. The protein localises to the acrosome. It is found in the cell membrane. Its subcellular location is the membrane raft. It localises to the secreted. Functionally, required for optimal fertilization at the stage of sperm-oocyte fusion, plays a role in optimizing acrosome function, the translocation of IZUMO1 during the acrosome reaction and the fertilization process. Component of epididymosomes, one type of membranous microvesicules which mediate the transfer of lipids and proteins to spermatozoa plasma membrane during epididymal maturation. Also component of the CD9-positive microvesicules found in the cauda region. The protein is GLIPR1-like protein 1 (GLIPR1L1) of Homo sapiens (Human).